Reading from the N-terminus, the 123-residue chain is MPTIKQLIRNTRQPVRNVTKSPALRGCPQRRGTCTRVYTITPKKPNSALRKVARVRLTSGFEITAYIPGIGHNLQEHSVVLVRGGRVKDLPGVRYHIVRGTLDAVGVKDRQQGRSKYGVKKPK.

The protein belongs to the universal ribosomal protein uS12 family. In terms of assembly, part of the 30S ribosomal subunit.

It is found in the plastid. Its subcellular location is the chloroplast. Functionally, with S4 and S5 plays an important role in translational accuracy. Located at the interface of the 30S and 50S subunits. This chain is Small ribosomal subunit protein uS12cz/uS12cy (rps12-A), found in Platanus occidentalis (Sycamore).